We begin with the raw amino-acid sequence, 252 residues long: Imidazole glycerol phosphate synthase subunit HisF (252 aa).

Catalysis depends on residues Asp-11 and Asp-130.

This sequence belongs to the HisA/HisF family. In terms of assembly, heterodimer of HisH and HisF.

Its subcellular location is the cytoplasm. The catalysed reaction is 5-[(5-phospho-1-deoxy-D-ribulos-1-ylimino)methylamino]-1-(5-phospho-beta-D-ribosyl)imidazole-4-carboxamide + L-glutamine = D-erythro-1-(imidazol-4-yl)glycerol 3-phosphate + 5-amino-1-(5-phospho-beta-D-ribosyl)imidazole-4-carboxamide + L-glutamate + H(+). Its pathway is amino-acid biosynthesis; L-histidine biosynthesis; L-histidine from 5-phospho-alpha-D-ribose 1-diphosphate: step 5/9. IGPS catalyzes the conversion of PRFAR and glutamine to IGP, AICAR and glutamate. The HisF subunit catalyzes the cyclization activity that produces IGP and AICAR from PRFAR using the ammonia provided by the HisH subunit. In Rhodospirillum rubrum (strain ATCC 11170 / ATH 1.1.1 / DSM 467 / LMG 4362 / NCIMB 8255 / S1), this protein is Imidazole glycerol phosphate synthase subunit HisF.